Reading from the N-terminus, the 554-residue chain is Arginine--tRNA ligase (554 aa).

A 'HIGH' region motif is present at residues 129–139; the sequence is ANPTGPLHIGH.

Belongs to the class-I aminoacyl-tRNA synthetase family. In terms of assembly, monomer.

It is found in the cytoplasm. The catalysed reaction is tRNA(Arg) + L-arginine + ATP = L-arginyl-tRNA(Arg) + AMP + diphosphate. The protein is Arginine--tRNA ligase of Geobacter sp. (strain M21).